Consider the following 212-residue polypeptide: uncharacterized protein (212 aa).

Residues 1–20 form the signal peptide; sequence MKNLTIGAIFLIFFAVSAFA.

Its subcellular location is the virion. This is an uncharacterized protein from Acanthamoeba polyphaga (Amoeba).